We begin with the raw amino-acid sequence, 114 residues long: Iron-sulfur cluster insertion protein ErpA (114 aa).

Cys-42, Cys-106, and Cys-108 together coordinate iron-sulfur cluster.

This sequence belongs to the HesB/IscA family. In terms of assembly, homodimer. Iron-sulfur cluster serves as cofactor.

Its function is as follows. Required for insertion of 4Fe-4S clusters for at least IspG. This Klebsiella pneumoniae subsp. pneumoniae (strain ATCC 700721 / MGH 78578) protein is Iron-sulfur cluster insertion protein ErpA.